The sequence spans 340 residues: DNA-directed RNA polymerase subunit alpha (340 aa).

The interval 1–236 (MLSLSKNWNT…EQLQLFIAFE (236 aa)) is alpha N-terminal domain (alpha-NTD). The segment at 251-340 (FSPYLLKRVD…LSKRYEDSYN (90 aa)) is alpha C-terminal domain (alpha-CTD).

The protein belongs to the RNA polymerase alpha chain family. Homodimer. The RNAP catalytic core consists of 2 alpha, 1 beta, 1 beta' and 1 omega subunit. When a sigma factor is associated with the core the holoenzyme is formed, which can initiate transcription.

The catalysed reaction is RNA(n) + a ribonucleoside 5'-triphosphate = RNA(n+1) + diphosphate. In terms of biological role, DNA-dependent RNA polymerase catalyzes the transcription of DNA into RNA using the four ribonucleoside triphosphates as substrates. The protein is DNA-directed RNA polymerase subunit alpha of Rickettsia typhi (strain ATCC VR-144 / Wilmington).